Consider the following 204-residue polypeptide: MEEENIYPIFDRMLSRKDKEELLGQRGVMLWLTGLSGSGKSTIAIALERELHKRGLLCRILDGDNIRSGINNNLGFSAEDRVENIRRIAEIGKLFVDTGIITIAAFISPGNELRQMAARIIGIEDFLEIYVSTPLVECEKRDVKGLYAKARRGEIKNFTGISAPFEAPEHPALSLDTSKLSLEESVNTLLELVLPIVGKKGEKI.

ATP is bound at residue 34-41; it reads GLSGSGKS. Serine 108 (phosphoserine intermediate) is an active-site residue.

This sequence belongs to the APS kinase family.

The enzyme catalyses adenosine 5'-phosphosulfate + ATP = 3'-phosphoadenylyl sulfate + ADP + H(+). It functions in the pathway sulfur metabolism; hydrogen sulfide biosynthesis; sulfite from sulfate: step 2/3. In terms of biological role, catalyzes the synthesis of activated sulfate. In Phocaeicola vulgatus (strain ATCC 8482 / DSM 1447 / JCM 5826 / CCUG 4940 / NBRC 14291 / NCTC 11154) (Bacteroides vulgatus), this protein is Adenylyl-sulfate kinase.